Here is a 620-residue protein sequence, read N- to C-terminus: Membrane protein insertase YidC (620 aa).

6 helical membrane-spanning segments follow: residues 5 to 25 (QIIG…FMST), 343 to 363 (LGWP…FDGL), 366 to 386 (VFSS…LVLL), 436 to 456 (LSGC…FNFF), 482 to 502 (LPFT…LMTI), and 529 to 549 (PVVF…YYFV).

This sequence belongs to the OXA1/ALB3/YidC family. Type 1 subfamily. Interacts with the Sec translocase complex via SecD. Specifically interacts with transmembrane segments of nascent integral membrane proteins during membrane integration.

The protein localises to the cell inner membrane. Required for the insertion and/or proper folding and/or complex formation of integral membrane proteins into the membrane. Involved in integration of membrane proteins that insert both dependently and independently of the Sec translocase complex, as well as at least some lipoproteins. Aids folding of multispanning membrane proteins. The protein is Membrane protein insertase YidC of Cytophaga hutchinsonii (strain ATCC 33406 / DSM 1761 / CIP 103989 / NBRC 15051 / NCIMB 9469 / D465).